A 421-amino-acid polypeptide reads, in one-letter code: tRNA(Ile)-lysidine synthase (421 aa).

Residue 26 to 31 coordinates ATP; it reads SGGADS.

Belongs to the tRNA(Ile)-lysidine synthase family.

Its subcellular location is the cytoplasm. It catalyses the reaction cytidine(34) in tRNA(Ile2) + L-lysine + ATP = lysidine(34) in tRNA(Ile2) + AMP + diphosphate + H(+). In terms of biological role, ligates lysine onto the cytidine present at position 34 of the AUA codon-specific tRNA(Ile) that contains the anticodon CAU, in an ATP-dependent manner. Cytidine is converted to lysidine, thus changing the amino acid specificity of the tRNA from methionine to isoleucine. This is tRNA(Ile)-lysidine synthase from Streptococcus thermophilus (strain CNRZ 1066).